Reading from the N-terminus, the 147-residue chain is uncharacterized protein (147 aa).

A compositionally biased stretch (low complexity) spans alanine 72–proline 81. The tract at residues alanine 72–proline 147 is disordered.

This is an uncharacterized protein from Homo sapiens (Human).